A 213-amino-acid polypeptide reads, in one-letter code: tRNA (guanine-N(7)-)-methyltransferase (213 aa).

S-adenosyl-L-methionine is bound by residues Glu38, Glu63, Asp91, and Asp113. Residue Asp113 is part of the active site. Residues Lys117, Asp149, and 192-195 (TEYE) each bind substrate.

It belongs to the class I-like SAM-binding methyltransferase superfamily. TrmB family.

The catalysed reaction is guanosine(46) in tRNA + S-adenosyl-L-methionine = N(7)-methylguanosine(46) in tRNA + S-adenosyl-L-homocysteine. It functions in the pathway tRNA modification; N(7)-methylguanine-tRNA biosynthesis. Functionally, catalyzes the formation of N(7)-methylguanine at position 46 (m7G46) in tRNA. This is tRNA (guanine-N(7)-)-methyltransferase from Mycoplasmoides gallisepticum (strain R(low / passage 15 / clone 2)) (Mycoplasma gallisepticum).